A 675-amino-acid chain; its full sequence is UvrABC system protein B (675 aa).

Residues 32–417 enclose the Helicase ATP-binding domain; it reads EGLSDGLAYQ…EHAGQVVEQV (386 aa). Residue 45-52 participates in ATP binding; it reads GVTGSGKT. The Beta-hairpin motif lies at 98–121; that stretch reads YYDYYQPEAYVPSRDLFIEKDSAI. In terms of domain architecture, Helicase C-terminal spans 436 to 602; it reads QVDDLMSEIN…QIKKQVKDII (167 aa). In terms of domain architecture, UVR spans 634 to 669; it reads IKEIAKLEKAMQQAARDLQFEEAAVLRDRIRNIKEN.

Belongs to the UvrB family. As to quaternary structure, forms a heterotetramer with UvrA during the search for lesions. Interacts with UvrC in an incision complex.

It localises to the cytoplasm. Functionally, the UvrABC repair system catalyzes the recognition and processing of DNA lesions. A damage recognition complex composed of 2 UvrA and 2 UvrB subunits scans DNA for abnormalities. Upon binding of the UvrA(2)B(2) complex to a putative damaged site, the DNA wraps around one UvrB monomer. DNA wrap is dependent on ATP binding by UvrB and probably causes local melting of the DNA helix, facilitating insertion of UvrB beta-hairpin between the DNA strands. Then UvrB probes one DNA strand for the presence of a lesion. If a lesion is found the UvrA subunits dissociate and the UvrB-DNA preincision complex is formed. This complex is subsequently bound by UvrC and the second UvrB is released. If no lesion is found, the DNA wraps around the other UvrB subunit that will check the other stand for damage. The protein is UvrABC system protein B of Neisseria meningitidis serogroup A / serotype 4A (strain DSM 15465 / Z2491).